The sequence spans 89 residues: Small ribosomal subunit protein bS16 (89 aa).

It belongs to the bacterial ribosomal protein bS16 family.

In Nitrosomonas europaea (strain ATCC 19718 / CIP 103999 / KCTC 2705 / NBRC 14298), this protein is Small ribosomal subunit protein bS16.